The chain runs to 138 residues: Small ribosomal subunit protein uS11c (138 aa).

Positions 1 to 22 (MAKAIPKISSRRNGRISSRKGA) are disordered. The span at 9–22 (SSRRNGRISSRKGA) shows a compositional bias: basic residues.

It belongs to the universal ribosomal protein uS11 family. Part of the 30S ribosomal subunit.

The protein localises to the plastid. It is found in the chloroplast. The chain is Small ribosomal subunit protein uS11c from Solanum bulbocastanum (Wild potato).